Reading from the N-terminus, the 3479-residue chain is Abnormal spindle-like microcephaly-associated protein homolog (3479 aa).

The interval methionine 1 to threonine 29 is disordered. Residues serine 280, serine 283, serine 367, serine 392, serine 425, and serine 605 each carry the phosphoserine modification. The 137-residue stretch at lysine 920–glutamine 1056 folds into the Calponin-homology (CH) 1 domain. Positions valine 1057–serine 1078 form a coiled coil. Position 1103 is a phosphoserine (serine 1103). The Calponin-homology (CH) 2 domain maps to serine 1110–leucine 1261. 37 consecutive IQ domains span residues glutamine 1347–glutamine 1378, tyrosine 1393–serine 1422, leucine 1582–glutamine 1613, methionine 1605–serine 1634, threonine 1632–lysine 1661, isoleucine 1655–lysine 1684, methionine 1728–serine 1757, glutamine 1751–glutamine 1782, valine 1801–lysine 1830, glutamine 1824–lysine 1853, threonine 1874–lysine 1903, glutamate 1897–glutamine 1928, leucine 1947–glutamine 1978, glutamine 1970–glutamine 2001, threonine 2020–threonine 2049, cysteine 2043–glutamine 2074, leucine 2093–lysine 2124, methionine 2116–glutamine 2147, leucine 2239–glutamine 2270, methionine 2262–glutamine 2293, valine 2311–glutamine 2342, methionine 2334–glutamine 2365, glutamine 2384–glutamine 2415, methionine 2407–glutamine 2438, glutamine 2533–glutamine 2564, glutamine 2627–serine 2656, arginine 2668–glutamine 2699, methionine 2691–glutamine 2722, valine 2741–alanine 2770, glutamine 2817–phenylalanine 2848, glutamine 2862–glutamine 2893, isoleucine 2912–lysine 2941, isoleucine 2935–alanine 2966, lysine 2957–glutamine 2988, arginine 3032–glutamine 3063, phenylalanine 3082–histidine 3113, and phenylalanine 3206–serine 3237.

The protein localises to the cytoplasm. Its subcellular location is the cytoskeleton. It localises to the spindle. It is found in the nucleus. Probable role in mitotic spindle regulation and coordination of mitotic processes. May have a preferential role in regulating neurogenesis. This is Abnormal spindle-like microcephaly-associated protein homolog (ASPM) from Macaca mulatta (Rhesus macaque).